Here is an 850-residue protein sequence, read N- to C-terminus: Pro-neuregulin-2, membrane-bound isoform (850 aa).

The disordered stretch occupies residues 1-96 (MRQVCCSALP…AAAAGGMRRD (96 aa)). Positions 1–111 (MRQVCCSALP…SMLLFGVSLA (111 aa)) are excised as a propeptide. Residues 20–59 (SSYSDSSSSSSERSSSSSSSSSESGSSSRSSSNNSSISRP) show a composition bias toward low complexity. N-linked (GlcNAc...) asparagine glycans are attached at residues Asn52 and Asn53. A compositionally biased stretch (pro residues) spans 60–74 (AAPPEPRPQQQPQPR). Residues 75–92 (SPAARRAAARSRAAAAGG) show a composition bias toward low complexity. Over 112–405 (CYSPSLKSVQ…QKAEELYQKR (294 aa)) the chain is Extracellular. N-linked (GlcNAc...) asparagine glycosylation is found at Asn147, Asn278, and Asn346. The Ig-like C2-type domain occupies 237–332 (PKLKKMKSQT…RGRLYVNSVS (96 aa)). Cystine bridges form between Cys257–Cys311, Cys345–Cys359, Cys353–Cys370, and Cys372–Cys381. Residues 341-382 (HARKCNETAKSYCVNGGVCYYIEGINQLSCKCPNGFFGQRCL) enclose the EGF-like domain. A helical transmembrane segment spans residues 406–426 (VLTITGICVALLVVGIVCVVA). Residues 427 to 850 (YCKTKKQRKQ…PRAKQDSAPL (424 aa)) lie on the Cytoplasmic side of the membrane. 5 disordered regions span residues 492-535 (TFSG…DSQS), 566-585 (EERR…SLRD), 647-681 (LLRH…YYPA), 700-788 (LPAS…DGAL), and 801-850 (AHDA…SAPL). Low complexity predominate over residues 494–506 (SGSHSCSPSHHCS). Residues 514–527 (HRHESHTWSLERSE) are compositionally biased toward basic and acidic residues. Residues 651–665 (PAPPGPGPGPGPGPG) show a composition bias toward pro residues. A compositionally biased stretch (low complexity) spans 750–767 (GLAAQRARAARDSLSLSS).

Belongs to the neuregulin family. As to quaternary structure, interacts with ERBB3 and ERBB4. In terms of processing, proteolytic cleavage close to the plasma membrane on the external face leads to the release of the soluble growth factor form. Extensive glycosylation precedes the proteolytic cleavage. As to expression, restricted to the cerebellum in the adult.

Its subcellular location is the cell membrane. It localises to the secreted. In terms of biological role, direct ligand for ERBB3 and ERBB4 tyrosine kinase receptors. Concomitantly recruits ERBB1 and ERBB2 coreceptors, resulting in ligand-stimulated tyrosine phosphorylation and activation of the ERBB receptors. May also promote the heterodimerization with the EGF receptor. The chain is Pro-neuregulin-2, membrane-bound isoform (NRG2) from Homo sapiens (Human).